We begin with the raw amino-acid sequence, 230 residues long: Transmembrane 4 L6 family member 20 (230 aa).

The Lumenal segment spans residues 1–11; it reads MTCCEGWTSCN. Residues 12 to 32 form a helical membrane-spanning segment; that stretch reads GFSLLVLLLLGVTLNAIPLIL. Residues 33–44 are Cytoplasmic-facing; it reads NFVDEDQFFENP. Residues 45-65 traverse the membrane as a helical segment; sequence ISCFEWWFPGIIGAGVMAIPA. Residues 66–83 are Lumenal-facing; sequence TTMSLAARKRACCNNKTG. Residues 84 to 104 traverse the membrane as a helical segment; that stretch reads MFLSSLLNAITVIGAAYCLLV. Residues 105 to 185 are Cytoplasmic-facing; sequence SIQALAEGPL…HFNSIENQHR (81 aa). A helical membrane pass occupies residues 186 to 206; the sequence is IIHFSVFLGLLLVGILEILFG. Residues 207-230 lie on the Lumenal side of the membrane; that stretch reads LSQIIIGFFGCLCGGVSNGRSQIV.

This sequence belongs to the L6 tetraspanin family. In terms of processing, glycosylated at Asn-132 in presence of ceramide which inverts the orientation of TM4SF20 in membranes exposing these residues to the endoplasmic reticulum lumen. Post-translationally, cleaved by signal peptidase at Ser-14 but the peptide does not act as a signal peptide. Cleavage is inhibited by ceramide which inverts the orientation of TM4SF20 in membranes exposing the N-terminus to the cytosol and not to the endoplasmic reticulum lumen.

Its subcellular location is the membrane. It localises to the endoplasmic reticulum membrane. Functionally, polytopic transmembrane protein. Inhibits regulated intramembrane proteolysis (RIP) of CREB3L1, inhibiting its activation and the induction of collagen synthesis. In response to ceramide, which alters TM4SF20 membrane topology, stimulates RIP activation of CREB3L1. Ceramide reverses the direction through which transmembrane helices are translocated into the endoplasmic reticulum membrane during translation of TM4SF20, this mechanism is called 'regulated alternative translocation' (RAT) and regulates the function of the transmembrane protein. The chain is Transmembrane 4 L6 family member 20 (TM4SF20) from Bos taurus (Bovine).